We begin with the raw amino-acid sequence, 249 residues long: Exosome complex component Rrp41 (249 aa).

Belongs to the RNase PH family. Rrp41 subfamily. In terms of assembly, component of the archaeal exosome complex. Forms a hexameric ring-like arrangement composed of 3 Rrp41-Rrp42 heterodimers. The hexameric ring associates with a trimer of Rrp4 and/or Csl4 subunits.

The protein resides in the cytoplasm. In terms of biological role, catalytic component of the exosome, which is a complex involved in RNA degradation. Has 3'-&gt;5' exoribonuclease activity. Can also synthesize heteromeric RNA-tails. The sequence is that of Exosome complex component Rrp41 from Thermococcus kodakarensis (strain ATCC BAA-918 / JCM 12380 / KOD1) (Pyrococcus kodakaraensis (strain KOD1)).